The sequence spans 196 residues: Transcriptional regulatory protein UhpA (196 aa).

Residues 3-116 enclose the Response regulatory domain; it reads TVALIDDHLI…ELIAAVHTVA (114 aa). Asp-54 bears the 4-aspartylphosphate mark. The 66-residue stretch at 131 to 196 folds into the HTH luxR-type domain; that stretch reads AAGRQDPLTK…ELAHRMFDGW (66 aa). A DNA-binding region (H-T-H motif) is located at residues 155-174; it reads VKEIAAELGLSPKTVHVHRA.

In terms of processing, phosphorylated and dephosphorylated by UhpB.

Its subcellular location is the cytoplasm. Functionally, part of the UhpABC signaling cascade that controls the expression of the hexose phosphate transporter UhpT. Activates the transcription of the uhpT gene. Acts by binding specifically to the uhpT promoter region. The chain is Transcriptional regulatory protein UhpA (uhpA) from Salmonella typhimurium (strain LT2 / SGSC1412 / ATCC 700720).